Reading from the N-terminus, the 133-residue chain is Ribosome-binding factor A (133 aa).

The protein belongs to the RbfA family. In terms of assembly, monomer. Binds 30S ribosomal subunits, but not 50S ribosomal subunits or 70S ribosomes.

The protein resides in the cytoplasm. Its function is as follows. One of several proteins that assist in the late maturation steps of the functional core of the 30S ribosomal subunit. Associates with free 30S ribosomal subunits (but not with 30S subunits that are part of 70S ribosomes or polysomes). Required for efficient processing of 16S rRNA. May interact with the 5'-terminal helix region of 16S rRNA. This Salmonella heidelberg (strain SL476) protein is Ribosome-binding factor A.